Here is a 263-residue protein sequence, read N- to C-terminus: Thymidylate synthase (263 aa).

Residues Arg25 and 123 to 124 (RR) each bind dUMP. Cys143 serves as the catalytic Nucleophile. Residues 163–166 (RSGD), Asn174, and 204–206 (HIY) each bind dUMP. Asp166 provides a ligand contact to (6R)-5,10-methylene-5,6,7,8-tetrahydrofolate. Ser262 contributes to the (6R)-5,10-methylene-5,6,7,8-tetrahydrofolate binding site.

It belongs to the thymidylate synthase family. Bacterial-type ThyA subfamily. As to quaternary structure, homodimer.

It is found in the cytoplasm. The enzyme catalyses dUMP + (6R)-5,10-methylene-5,6,7,8-tetrahydrofolate = 7,8-dihydrofolate + dTMP. It participates in pyrimidine metabolism; dTTP biosynthesis. In terms of biological role, catalyzes the reductive methylation of 2'-deoxyuridine-5'-monophosphate (dUMP) to 2'-deoxythymidine-5'-monophosphate (dTMP) while utilizing 5,10-methylenetetrahydrofolate (mTHF) as the methyl donor and reductant in the reaction, yielding dihydrofolate (DHF) as a by-product. This enzymatic reaction provides an intracellular de novo source of dTMP, an essential precursor for DNA biosynthesis. The protein is Thymidylate synthase of Clostridium beijerinckii (strain ATCC 51743 / NCIMB 8052) (Clostridium acetobutylicum).